The primary structure comprises 376 residues: Flagellar P-ring protein (376 aa).

A signal peptide spans 1–29 (MTQRPFSLLSHLGRICLAAAMLAALPAQA).

It belongs to the FlgI family. The basal body constitutes a major portion of the flagellar organelle and consists of four rings (L,P,S, and M) mounted on a central rod.

It localises to the periplasm. It is found in the bacterial flagellum basal body. Functionally, assembles around the rod to form the L-ring and probably protects the motor/basal body from shearing forces during rotation. The chain is Flagellar P-ring protein from Bordetella avium (strain 197N).